The sequence spans 97 residues: Small ribosomal subunit protein bS6 (97 aa).

This sequence belongs to the bacterial ribosomal protein bS6 family.

Functionally, binds together with bS18 to 16S ribosomal RNA. This Listeria monocytogenes serotype 4b (strain CLIP80459) protein is Small ribosomal subunit protein bS6.